The sequence spans 146 residues: Antirestriction protein KlcA (146 aa).

It belongs to the antirestriction protein family.

In terms of biological role, could be involved in overcoming restriction barriers during establishment after conjugative transfer. This is Antirestriction protein KlcA (klcA) from Escherichia coli.